A 212-amino-acid polypeptide reads, in one-letter code: Lipid A acyltransferase PagP (212 aa).

Residues 1-26 form the signal peptide; sequence MSSTYFHSSLLAATLFSVTLTAPAFA. A compositionally biased stretch (low complexity) spans 29 to 44; sequence NTQNTPQTITTKKPQP. The interval 29–50 is disordered; the sequence is NTQNTPQTITTKKPQPAENTFS. Active-site residues include His-84, Asp-127, and Ser-128.

The protein belongs to the lipid A palmitoyltransferase family. In terms of assembly, homodimer.

It is found in the cell outer membrane. It carries out the reaction a lipid A + a 1,2-diacyl-sn-glycero-3-phosphocholine = a hepta-acyl lipid A + a 2-acyl-sn-glycero-3-phosphocholine. It catalyses the reaction a lipid IVA + a 1,2-diacyl-sn-glycero-3-phosphocholine = a lipid IVB + a 2-acyl-sn-glycero-3-phosphocholine. The enzyme catalyses a lipid IIA + a 1,2-diacyl-sn-glycero-3-phosphocholine = a lipid IIB + a 2-acyl-sn-glycero-3-phosphocholine. Transfers a fatty acid residue from the sn-1 position of a phospholipid to the N-linked hydroxyfatty acid chain on the proximal unit of lipid A or its precursors. The chain is Lipid A acyltransferase PagP from Proteus mirabilis (strain HI4320).